A 162-amino-acid chain; its full sequence is Photosystem II extrinsic protein V (162 aa).

Residues 1 to 25 form the signal peptide; the sequence is MFKKFSALFTLLFTLCLVNPMLVYS. Heme c is bound by residues Cys-62, Cys-65, His-66, and His-117.

The protein belongs to the cytochrome c family. PsbV subfamily. As to quaternary structure, PSII is composed of 1 copy each of membrane proteins PsbA, PsbB, PsbC, PsbD, PsbE, PsbF, PsbH, PsbI, PsbJ, PsbK, PsbL, PsbM, PsbT, PsbX, PsbY, PsbZ, Psb30/Ycf12, at least 3 peripheral proteins of the oxygen-evolving complex and a large number of cofactors. It forms dimeric complexes. The cofactor is heme c.

The protein resides in the plastid. It is found in the chloroplast thylakoid membrane. One of the extrinsic, lumenal subunits of photosystem II (PSII). PSII is a light-driven water plastoquinone oxidoreductase, using light energy to abstract electrons from H(2)O, generating a proton gradient subsequently used for ATP formation. The extrinsic proteins stabilize the structure of photosystem II oxygen-evolving complex (OEC), the ion environment of oxygen evolution and protect the OEC against heat-induced inactivation. The protein is Photosystem II extrinsic protein V of Guillardia theta (Cryptophyte).